Here is a 361-residue protein sequence, read N- to C-terminus: D-alanine--D-alanine ligase (361 aa).

Positions 139-336 (KLLLKEKEIS…FSQIIDNMIN (198 aa)) constitute an ATP-grasp domain. 167–222 (EKNLGYPMIVKPARLGSSIGVSKVVDRKNFEEAVKNVLLFDNKVLVEKWINAREIN) is an ATP binding site. 3 residues coordinate Mg(2+): aspartate 296, glutamate 307, and asparagine 309.

It belongs to the D-alanine--D-alanine ligase family. Requires Mg(2+) as cofactor. Mn(2+) is required as a cofactor.

The protein resides in the cytoplasm. The enzyme catalyses 2 D-alanine + ATP = D-alanyl-D-alanine + ADP + phosphate + H(+). It functions in the pathway cell wall biogenesis; peptidoglycan biosynthesis. In terms of biological role, cell wall formation. The sequence is that of D-alanine--D-alanine ligase from Thermosipho melanesiensis (strain DSM 12029 / CIP 104789 / BI429).